Here is a 215-residue protein sequence, read N- to C-terminus: Chaperone protein TorD (215 aa).

The protein belongs to the TorD/DmsD family. TorD subfamily.

The protein localises to the cytoplasm. Functionally, involved in the biogenesis of TorA. Acts on TorA before the insertion of the molybdenum cofactor and, as a result, probably favors a conformation of the apoenzyme that is competent for acquiring the cofactor. In Shewanella piezotolerans (strain WP3 / JCM 13877), this protein is Chaperone protein TorD.